The chain runs to 283 residues: Shikimate dehydrogenase (NADP(+)) (283 aa).

Shikimate contacts are provided by residues 19-21 and Thr66; that span reads SFS. Lys70 (proton acceptor) is an active-site residue. NADP(+) is bound at residue Glu82. Positions 91 and 106 each coordinate shikimate. NADP(+) contacts are provided by residues 129 to 133 and Ile225; that span reads GAGGA. Tyr227 contributes to the shikimate binding site. Gly248 contacts NADP(+).

This sequence belongs to the shikimate dehydrogenase family. Homodimer.

It carries out the reaction shikimate + NADP(+) = 3-dehydroshikimate + NADPH + H(+). It participates in metabolic intermediate biosynthesis; chorismate biosynthesis; chorismate from D-erythrose 4-phosphate and phosphoenolpyruvate: step 4/7. Involved in the biosynthesis of the chorismate, which leads to the biosynthesis of aromatic amino acids. Catalyzes the reversible NADPH linked reduction of 3-dehydroshikimate (DHSA) to yield shikimate (SA). This Methanosphaera stadtmanae (strain ATCC 43021 / DSM 3091 / JCM 11832 / MCB-3) protein is Shikimate dehydrogenase (NADP(+)).